Reading from the N-terminus, the 813-residue chain is Hyaluronate lyase HylB (813 aa).

The segment at residues 1-32 (MFGTPSRRTFLTASALSAMALAASPTVTDAIA) is a signal peptide (tat-type signal). Catalysis depends on residues Asn222, His272, and Tyr281.

This sequence belongs to the polysaccharide lyase 8 family. Predicted to be exported by the Tat system. The position of the signal peptide cleavage has not been experimentally proven.

The protein resides in the secreted. The enzyme catalyses [hyaluronan](n) = n 3-(4-deoxy-beta-D-gluc-4-enuronosyl)-N-acetyl-D-glucosamine + H2O. Its function is as follows. Degrades hyaluronic acid (HA) exclusively into HA disaccharides (HA-2). Produced HA-2s confer anti-inflammatory properties leading to reduced immunopathology in the mouse model of acne. This Cutibacterium acnes (strain DSM 16379 / KPA171202) (Propionibacterium acnes) protein is Hyaluronate lyase HylB.